A 554-amino-acid chain; its full sequence is Phospholipase B-like protein E (554 aa).

The N-terminal stretch at 1-19 (MKLFILLIVIVFLISNSYS) is a signal peptide. Asn113, Asn140, Asn231, Asn302, Asn340, and Asn546 each carry an N-linked (GlcNAc...) asparagine glycan.

Belongs to the phospholipase B-like family.

It localises to the secreted. Probable phospholipase. This is Phospholipase B-like protein E (plbE) from Dictyostelium discoideum (Social amoeba).